The sequence spans 246 residues: Predicted GPI-anchored protein 33 (246 aa).

The signal sequence occupies residues 1-16 (MRGIILLSFVLTSCLA). N-linked (GlcNAc...) asparagine glycosylation occurs at asparagine 214. Asparagine 219 is lipidated: GPI-anchor amidated asparagine. Residues 220–246 (AAGVYSTNSVLVFVSICIGFIGGSLGI) constitute a propeptide, removed in mature form.

It localises to the cell membrane. This Candida albicans (strain SC5314 / ATCC MYA-2876) (Yeast) protein is Predicted GPI-anchored protein 33 (PGA33).